The sequence spans 115 residues: Large ribosomal subunit protein bL20 (115 aa).

This sequence belongs to the bacterial ribosomal protein bL20 family.

Functionally, binds directly to 23S ribosomal RNA and is necessary for the in vitro assembly process of the 50S ribosomal subunit. It is not involved in the protein synthesizing functions of that subunit. The protein is Large ribosomal subunit protein bL20 of Chlorobium chlorochromatii (strain CaD3).